Reading from the N-terminus, the 148-residue chain is Large ribosomal subunit protein uL15 (148 aa).

Basic and acidic residues predominate over residues 1–10; it reads MQLHNLEYKK. The segment at 1-42 is disordered; the sequence is MQLHNLEYKKGSRNHKEKRVGRGHGSGLGKTSGRGQDGQKAR. The segment covering 11-22 has biased composition (basic residues); sequence GSRNHKEKRVGR. Positions 23–36 are enriched in gly residues; sequence GHGSGLGKTSGRGQ.

It belongs to the universal ribosomal protein uL15 family. In terms of assembly, part of the 50S ribosomal subunit.

Its function is as follows. Binds to the 23S rRNA. The protein is Large ribosomal subunit protein uL15 of Ureaplasma urealyticum serovar 10 (strain ATCC 33699 / Western).